Consider the following 50-residue polypeptide: U37-theraphotoxin-Cg1a (50 aa).

The N-terminal stretch at Met1–Thr19 is a signal peptide.

This sequence belongs to the neurotoxin 10 (Hwtx-1) family. 67 (Jztx-67) subfamily. As to expression, expressed by the venom gland.

Its subcellular location is the secreted. The polypeptide is U37-theraphotoxin-Cg1a (Chilobrachys guangxiensis (Chinese earth tiger tarantula)).